A 208-amino-acid polypeptide reads, in one-letter code: Granulocyte colony-stimulating factor (208 aa).

Positions 1-30 are cleaved as a signal peptide; the sequence is MAQLSAQRRMKLMALQLLLWQSALWSGREA. Intrachain disulfides connect Cys72-Cys78 and Cys100-Cys110. A glycan (O-linked (GalNAc...) threonine) is linked at Thr169.

The protein belongs to the IL-6 superfamily. In terms of assembly, monomer. O-glycosylated.

It localises to the secreted. In terms of biological role, granulocyte/macrophage colony-stimulating factors are cytokines that act in hematopoiesis by controlling the production, differentiation, and function of 2 related white cell populations of the blood, the granulocytes and the monocytes-macrophages. This CSF induces granulocytes. The polypeptide is Granulocyte colony-stimulating factor (Csf3) (Mus musculus (Mouse)).